The following is a 704-amino-acid chain: Elongation factor G 1 (704 aa).

A tr-type G domain is found at 8 to 291 (ERYRNIGISA…AVIDYLPSPA (284 aa)). GTP is bound by residues 17-24 (AHIDAGKT), 88-92 (DTPGH), and 142-145 (NKMD).

It belongs to the TRAFAC class translation factor GTPase superfamily. Classic translation factor GTPase family. EF-G/EF-2 subfamily.

The protein localises to the cytoplasm. Functionally, catalyzes the GTP-dependent ribosomal translocation step during translation elongation. During this step, the ribosome changes from the pre-translocational (PRE) to the post-translocational (POST) state as the newly formed A-site-bound peptidyl-tRNA and P-site-bound deacylated tRNA move to the P and E sites, respectively. Catalyzes the coordinated movement of the two tRNA molecules, the mRNA and conformational changes in the ribosome. In Burkholderia pseudomallei (strain 1710b), this protein is Elongation factor G 1.